Consider the following 261-residue polypeptide: Indole-3-glycerol phosphate synthase (261 aa).

This sequence belongs to the TrpC family.

The enzyme catalyses 1-(2-carboxyphenylamino)-1-deoxy-D-ribulose 5-phosphate + H(+) = (1S,2R)-1-C-(indol-3-yl)glycerol 3-phosphate + CO2 + H2O. It participates in amino-acid biosynthesis; L-tryptophan biosynthesis; L-tryptophan from chorismate: step 4/5. This is Indole-3-glycerol phosphate synthase from Burkholderia cenocepacia (strain HI2424).